Here is a 385-residue protein sequence, read N- to C-terminus: MGTTERESDPIAALILDRLSCTEYACSSLSRVNGGLMNFIYRGTLSRPLPDGATTVIVKHAEEYLSGIEGLSLSTYRSVIAAITLSFGYCVMDVESVQTNRYCVALDEVEVAVPRVYKFDAESNTQILEDITGYITVCEFLTSRCTQSTSPAFTTRLGFRLGSWLGGLHAWGEGRSPAEIIGGVEENQEAQDGSFDFFYGNPVRRVEQFPHLLGDCKEVLEQIRDRAAREQKSRTGEKFGFVHGDILSRKSVLIPGDSVTRDQHLRFVIIDWELSQYECHFRECGEVLGDLYLLKRFQDIDGAMSIIQGFLEGYPPLNEDAIFRTAIYLGLFLLANEVTLSTDYPKQQIEDFVILARDLVLAGWHKDRETLAKTVFGPVFFRAMN.

2 residues coordinate ATP: N38 and K59. Residue D245 is part of the active site.

The protein belongs to the methylthioribose kinase family. As to quaternary structure, monomer.

It catalyses the reaction (1S,3S,6S,7S,8S,9S)-6-[(4-methoxyphenyl)methyl]-3-(methylamino)-5-azatricyclo[6.3.1.0(1,5)]dodecane-7,9-diol + ATP = (-)-FR901483 + ADP + 2 H(+). It functions in the pathway secondary metabolite biosynthesis. In terms of biological role, phosphotransferase; part of the gene cluster that mediates the biosynthesis of the alkaloid (-)-FR901483, a potent immunosuppressant that shows efficacy in animal models and a probable inhibitor of purine nucleotide biosynthesis by targeting phosphoribosylpyrophosphate amidotransferase (PPAT). FrzJ catalyzes the last step of the pathway by phosphorylating the C4'-OH of dephospho-(-)-FR901483 to produce (-)-FR901483. The biosynthesis of (-)-FR901483 starts with the condensation of two L-tyrosines to yield (S,S)-dityrosyl-piperazine. This process occurs in 3 steps with the non-canonical nonribosomal peptide synthetase FrzA catalyzing the reduction of L-tyrosine into L-tyrosinal, the spontaneous condensation of 2 L-tyrosinal units, and the subsequent reduction by the NmrA-like family domain-containing oxidoreductase FrzB. The cytochrome P450 monooxygenase FrzC then performs coupling between N10 and C1' to morph the piperazine into a 1,4-diazabicyclo[3.2.1]octane spiro-fused to a 2,5-cyclohexadienone. The dienone portion is further reduced to cyclohexanone by the flavin-dependent reductase FrzD. The methyltranserases (MTs) FrzE and FrzF are then involved in the methylation at the C10' amine and the C4 phenolic oxygen, respectively. The order of the two MTs appear to be interchangeable. Cleavage of the C9-N10' bond by the dioxygenase FrzG then leads to formation of a conjugated iminium. In addition to the oxidation of C9, an additional dehydrogenation between C7 and C8 can occur to give a likely shunt product. The next biosynthetic step is the intramolecular aldol condensation catalyzed by the newly identified aldolase FrzH to yield an aza-tricyclic product with the formation of a C9-C3' bond. The short-chain dehydrogenase/reductase FrzI then produces dephospho-(-)-FR901483 that is phosphorylated at C4'-OH into (-)-FR901483 by the phosphotransferase FrzJ. The chain is Phosphotransferase FrzJ from Cladobotryum sp.